The sequence spans 401 residues: Exodeoxyribonuclease 7 large subunit (401 aa).

It belongs to the XseA family. In terms of assembly, heterooligomer composed of large and small subunits.

Its subcellular location is the cytoplasm. It catalyses the reaction Exonucleolytic cleavage in either 5'- to 3'- or 3'- to 5'-direction to yield nucleoside 5'-phosphates.. Bidirectionally degrades single-stranded DNA into large acid-insoluble oligonucleotides, which are then degraded further into small acid-soluble oligonucleotides. In Clostridioides difficile (strain 630) (Peptoclostridium difficile), this protein is Exodeoxyribonuclease 7 large subunit.